A 386-amino-acid polypeptide reads, in one-letter code: MNIHEYQGKAVLRSYGVSVPNGKVAFTVEEAVEAAKELGTEVCVVKAQIHAGGRGKAGGVKVAKNLEEVRTYAESILGTTLVTHQTGPEGKEVKRLLIEEGCDIKKEYYVGLVLDRATSQVVLMASEEGGTEIEEVAEKTPEKIFKEYIDPAVGLQGFQARRIAFNINIPKELVGQAVKFMMGLYSAFIEKDCSIAEINPLVTTGDGKVMALDAKLNFDSNALYRNKDILELRDLEEEDSKEIEASKYDLNYIPLDGNIGCMVNGAGLAMATMDIIKHYHGDPANFLDVGGGATAEKVTEAFKIILSDKNVKGIFVNIFGGIMKCDVIAEGVIEATKQVGLELPLVVRLEGTNVELGKKILNESGLNIVAAESMADGAQKIVSLVG.

Positions 9 to 244 constitute an ATP-grasp domain; the sequence is KAVLRSYGVS…LEEEDSKEIE (236 aa). ATP-binding positions include lysine 46, 53–55, glutamate 99, cysteine 102, and glutamate 107; that span reads GRG. Asparagine 199 and aspartate 213 together coordinate Mg(2+). Substrate contacts are provided by residues asparagine 264 and 321 to 323; that span reads GIM.

The protein belongs to the succinate/malate CoA ligase beta subunit family. As to quaternary structure, heterotetramer of two alpha and two beta subunits. Requires Mg(2+) as cofactor.

It catalyses the reaction succinate + ATP + CoA = succinyl-CoA + ADP + phosphate. The catalysed reaction is GTP + succinate + CoA = succinyl-CoA + GDP + phosphate. The protein operates within carbohydrate metabolism; tricarboxylic acid cycle; succinate from succinyl-CoA (ligase route): step 1/1. Its function is as follows. Succinyl-CoA synthetase functions in the citric acid cycle (TCA), coupling the hydrolysis of succinyl-CoA to the synthesis of either ATP or GTP and thus represents the only step of substrate-level phosphorylation in the TCA. The beta subunit provides nucleotide specificity of the enzyme and binds the substrate succinate, while the binding sites for coenzyme A and phosphate are found in the alpha subunit. This is Succinate--CoA ligase [ADP-forming] subunit beta from Bacillus mycoides (strain KBAB4) (Bacillus weihenstephanensis).